Consider the following 657-residue polypeptide: Penicillin-binding protein activator LpoA (657 aa).

The N-terminal stretch at 1-25 (MLSSTFVRSKAGLVPVILAALILAA) is a signal peptide. A lipid anchor (N-palmitoyl cysteine) is attached at Cys-26. Cys-26 carries S-diacylglycerol cysteine lipidation.

This sequence belongs to the LpoA family. Interacts with PBP1a.

The protein localises to the cell outer membrane. In terms of biological role, regulator of peptidoglycan synthesis that is essential for the function of penicillin-binding protein 1A (PBP1a). This Yersinia pestis bv. Antiqua (strain Angola) protein is Penicillin-binding protein activator LpoA.